The sequence spans 299 residues: Oxygen-dependent coproporphyrinogen-III oxidase (299 aa).

Position 92 (Ser92) interacts with substrate. His96 and His106 together coordinate a divalent metal cation. The Proton donor role is filled by His106. 108-110 (NVR) lines the substrate pocket. A divalent metal cation contacts are provided by His145 and His175. Residues 239-274 (YVEFNLVYDRGTLFGLQSGGRAESILMSLPPQVRWE) form an important for dimerization region. 257–259 (GGR) is a binding site for substrate.

The protein belongs to the aerobic coproporphyrinogen-III oxidase family. As to quaternary structure, homodimer. A divalent metal cation serves as cofactor.

Its subcellular location is the cytoplasm. The enzyme catalyses coproporphyrinogen III + O2 + 2 H(+) = protoporphyrinogen IX + 2 CO2 + 2 H2O. It participates in porphyrin-containing compound metabolism; protoporphyrin-IX biosynthesis; protoporphyrinogen-IX from coproporphyrinogen-III (O2 route): step 1/1. Its function is as follows. Involved in the heme biosynthesis. Catalyzes the aerobic oxidative decarboxylation of propionate groups of rings A and B of coproporphyrinogen-III to yield the vinyl groups in protoporphyrinogen-IX. The chain is Oxygen-dependent coproporphyrinogen-III oxidase from Xanthomonas campestris pv. campestris (strain B100).